Reading from the N-terminus, the 436-residue chain is Enolase 1 (436 aa).

Mg(2+) is bound at residue S40. C147 and C169 are joined by a disulfide. (2R)-2-phosphoglycerate-binding residues include Q164 and E208. The active-site Proton donor is the E208. Mg(2+)-binding residues include D243, E296, and D322. D322 provides a ligand contact to (2R)-2-phosphoglycerate. The Proton acceptor role is filled by K347. Residues R376 and S377 each contribute to the (2R)-2-phosphoglycerate site.

It belongs to the enolase family. In terms of assembly, homodimer. Homotetramer. Interacts with methyltransferase METH; the interaction inhibits METH catalytic activity; 2-phosphoglycerate binding to ENO prevents the interaction with METH. It depends on Mg(2+) as a cofactor.

The protein localises to the cytoplasm. Its subcellular location is the nucleus. It catalyses the reaction (2R)-2-phosphoglycerate = phosphoenolpyruvate + H2O. The protein operates within carbohydrate degradation; glycolysis; pyruvate from D-glyceraldehyde 3-phosphate: step 4/5. In terms of biological role, glycolytic enzyme that catalyzes the conversion of 2-phosphoglycerate to phosphoenolpyruvate. Inhibits tRNA methyltransferase METH catalytic activity in the absence of 2-phosphoglycerate. In Entamoeba histolytica (strain ATCC 30459 / HM-1:IMSS / ABRM), this protein is Enolase 1.